The following is a 211-amino-acid chain: DNA-directed RNA polymerases I, II, and III subunit RPABC1 (211 aa).

It belongs to the archaeal Rpo5/eukaryotic RPB5 RNA polymerase subunit family. Component of the RNA polymerase I (Pol I), RNA polymerase II (Pol II) and RNA polymerase III (Pol III) complexes consisting of at least 13, 12 and 17 subunits, respectively. In RNA Pol II, this subunit is present in 2-fold molar excess over the other subunits.

It is found in the nucleus. DNA-dependent RNA polymerase catalyzes the transcription of DNA into RNA using the four ribonucleoside triphosphates as substrates. Common component of RNA polymerases I, II and III which synthesize ribosomal RNA precursors, mRNA precursors and many functional non-coding RNAs, and small RNAs, such as 5S rRNA and tRNAs, respectively. Pol II is the central component of the basal RNA polymerase II transcription machinery. Pols are composed of mobile elements that move relative to each other. In Pol II, RPB5 is part of the lower jaw surrounding the central large cleft and thought to grab the incoming DNA template. Seems to be the major component in this process. This Caenorhabditis briggsae protein is DNA-directed RNA polymerases I, II, and III subunit RPABC1.